A 418-amino-acid polypeptide reads, in one-letter code: MDQNLSGLDCLSEPDEKRWPDGKRKRKNSQCMGKSGMSGDSLVSLPSAGYIPSYLDKDEPCVVCSDKATGYHYRCITCEGCKGFFRRTIQKNLHPSYSCKYDGCCIIDKITRNQCQLCRFKKCIAVGMAMDLVLDDSKRVAKRKLIEENRQRRRKEEMIKTLQQRPEPSSEEWELIRIVTEAHRSTNAQGSHWKQRRKFLPEDIGQSPMASMPDGDKVDLEAFSEFTKIITPAITRVVDFAKKLPMFSELTCEDQIILLKGCCMEIMSLRAAVRYDPDSETLTLSGEMAVKREQLKNGGLGVVSDAIFDLGRSLAAFNLDDTEVALLQAVLLMSSDRTGLICTDKIEKCQETYLLAFEHYINHRKHNIPHFWPKLLMKVTDLRMIGACHASRFLHMKVECPTELFPPLFLEVFEDQEV.

The tract at residues 1–38 (MDQNLSGLDCLSEPDEKRWPDGKRKRKNSQCMGKSGMS) is disordered. The tract at residues 1–60 (MDQNLSGLDCLSEPDEKRWPDGKRKRKNSQCMGKSGMSGDSLVSLPSAGYIPSYLDKDEP) is modulating. 2 NR C4-type zinc fingers span residues 61–81 (CVVC…CEGC) and 99–123 (CKYD…FKKC). Residues 61-135 (CVVCSDKATG…VGMAMDLVLD (75 aa)) constitute a DNA-binding region (nuclear receptor). Residues 171–415 (EEWELIRIVT…PPLFLEVFED (245 aa)) form the NR LBD domain.

Belongs to the nuclear hormone receptor family. NR1 subfamily. In terms of assembly, binds to thyroid hormone receptor element (TRE) weakly as homodimers and monomers, but binds TRE with much higher affinity as heterodimers with retinoid X receptors. Can bind DNA as a heterodimer with either rxra or rxrg.

It localises to the nucleus. Functionally, high affinity receptor for triiodothyronine (T3). This Xenopus laevis (African clawed frog) protein is Thyroid hormone receptor alpha-A (thra-a).